The primary structure comprises 37 residues: Large ribosomal subunit protein bL36c (37 aa).

It belongs to the bacterial ribosomal protein bL36 family.

It is found in the plastid. It localises to the chloroplast. The chain is Large ribosomal subunit protein bL36c from Angiopteris evecta (Mule's foot fern).